We begin with the raw amino-acid sequence, 303 residues long: Ribosomal protein uL3 glutamine methyltransferase (303 aa).

Belongs to the protein N5-glutamine methyltransferase family. PrmB subfamily.

The enzyme catalyses L-glutaminyl-[ribosomal protein uL3] + S-adenosyl-L-methionine = N(5)-methyl-L-glutaminyl-[ribosomal protein uL3] + S-adenosyl-L-homocysteine + H(+). Its function is as follows. Methylates large ribosomal subunit protein uL3 on a specific glutamine residue. In Neisseria meningitidis serogroup B (strain ATCC BAA-335 / MC58), this protein is Ribosomal protein uL3 glutamine methyltransferase.